A 235-amino-acid polypeptide reads, in one-letter code: Small ribosomal subunit protein uS3 (235 aa).

The KH type-2 domain occupies 39 to 107; sequence IRQYVFKALP…DVSLNIVEIR (69 aa).

The protein belongs to the universal ribosomal protein uS3 family. Part of the 30S ribosomal subunit. Forms a tight complex with proteins S10 and S14.

Functionally, binds the lower part of the 30S subunit head. Binds mRNA in the 70S ribosome, positioning it for translation. The chain is Small ribosomal subunit protein uS3 from Sphingopyxis alaskensis (strain DSM 13593 / LMG 18877 / RB2256) (Sphingomonas alaskensis).